Reading from the N-terminus, the 178-residue chain is Co-chaperone protein p23-1 (178 aa).

The 90-residue stretch at 2–91 (SRHPTVKWAQ…AESKWWNRLT (90 aa)) folds into the CS domain. 2 stretches are compositionally biased toward acidic residues: residues 112-126 (DDEDKGGEGDMDFGD) and 136-155 (DTDEIGEEVAEEDGDGEGET). Residues 112–178 (DDEDKGGEGD…DEEGVNAKKD (67 aa)) are disordered. The span at 157–178 (AETKEKKIDGEKDEEGVNAKKD) shows a compositional bias: basic and acidic residues.

It belongs to the p23/wos2 family. As to quaternary structure, interacts with HSP90 in an ATP-dependent manner.

Acts as a co-chaperone for HSP90. The chain is Co-chaperone protein p23-1 from Brassica napus (Rape).